We begin with the raw amino-acid sequence, 185 residues long: MHTSIQRIQQTFSQASTVLSIIAAIVFVVSYIQLVVANVWSLPEANFNLRGSKAARRFSRQYGANDPKKGKENVALKFDLDADLSPLFNWNTKLVFAYLTATYDGKRDDIVNEITIWDQIITDKDDSHIKLKGANSKYSLYDVEESFRNRNATVKLHWNIQPHVGAKIYGSLDATKGSIKFPQLV.

Residues 1-16 lie on the Cytoplasmic side of the membrane; the sequence is MHTSIQRIQQTFSQAS. The chain crosses the membrane as a helical; Signal-anchor for type II membrane protein span at residues 17-37; it reads TVLSIIAAIVFVVSYIQLVVA. Topologically, residues 38–185 are lumenal; sequence NVWSLPEANF…KGSIKFPQLV (148 aa). N-linked (GlcNAc...) asparagine glycosylation occurs at asparagine 151.

The protein belongs to the SPCS3 family. Component of the signal peptidase complex (SPC) composed of a catalytic subunit SEC11 and three accessory subunits SPC1, SPC2 and SPC3. The complex induces a local thinning of the ER membrane which is used to measure the length of the signal peptide (SP) h-region of protein substrates. This ensures the selectivity of the complex towards h-regions shorter than 18-20 amino acids. SPC associates with the translocon complex.

The protein resides in the endoplasmic reticulum membrane. Functionally, essential component of the signal peptidase complex (SPC) which catalyzes the cleavage of N-terminal signal sequences from nascent proteins as they are translocated into the lumen of the endoplasmic reticulum. Essential for the SPC catalytic activity, possibly by stabilizing and positioning the active center of the complex close to the lumenal surface. Essential for viability. The protein is Signal peptidase complex subunit 3 (SPC3) of Yarrowia lipolytica (strain CLIB 122 / E 150) (Yeast).